Consider the following 112-residue polypeptide: Integration host factor subunit alpha (112 aa).

It belongs to the bacterial histone-like protein family. As to quaternary structure, heterodimer of an alpha and a beta chain.

Its function is as follows. This protein is one of the two subunits of integration host factor, a specific DNA-binding protein that functions in genetic recombination as well as in transcriptional and translational control. In Sinorhizobium medicae (strain WSM419) (Ensifer medicae), this protein is Integration host factor subunit alpha.